Here is an 824-residue protein sequence, read N- to C-terminus: Dapper 1 (824 aa).

Disordered stretches follow at residues 1-34, 61-80, 131-150, 454-487, and 516-536; these read MKPI…QRTR, ALTP…GDTP, EEHL…LSDG, TSNV…ESTQ, and ASSS…SSSQ. Residues 2 to 343 are interaction with tcf7l1; sequence KPIPATPDHL…PVRTNKPRTS (342 aa). Basic and acidic residues predominate over residues 11 to 34; the sequence is LGQHQESPRRKDKGEAESERQRTR. Positions 19–47 form a coiled coil; sequence RRKDKGEAESERQRTRERLEATLAGLAEL. The span at 520–530 shows a compositional bias: basic and acidic residues; the sequence is FDERPPLDFKS. The PDZ-binding motif lies at 821 to 824; sequence MTTV.

This sequence belongs to the dapper family. In terms of assembly, interacts with dbf4, dvl2 and tcf7l1.

Its subcellular location is the cytoplasm. The protein localises to the nucleus. Involved in regulation of intracellular signaling pathways during development. Specifically thought to play a role in canonical and/or non-canonical Wnt signaling pathways through interaction with DSH (Dishevelled) family proteins. Binds to dvl2 and regulates the degradation of ctnnb1/beta-catenin, thereby modulating the transcriptional activation of target genes of the Wnt signaling pathway. May also bind to and directly stimulate the activity of tcf7l1. In Xenopus tropicalis (Western clawed frog), this protein is Dapper 1 (dact1).